The following is a 359-amino-acid chain: Mannonate dehydratase (359 aa).

The protein belongs to the mannonate dehydratase family. The cofactor is Fe(2+). Mn(2+) serves as cofactor.

The enzyme catalyses D-mannonate = 2-dehydro-3-deoxy-D-gluconate + H2O. Its pathway is carbohydrate metabolism; pentose and glucuronate interconversion. Functionally, catalyzes the dehydration of D-mannonate. The polypeptide is Mannonate dehydratase (uxuA) (Bacillus subtilis (strain 168)).